Reading from the N-terminus, the 617-residue chain is Probable Xaa-Pro aminopeptidase P (617 aa).

Residues aspartate 414, aspartate 425, glutamate 523, and glutamate 537 each coordinate Mn(2+).

The protein belongs to the peptidase M24B family. The cofactor is Mn(2+).

It catalyses the reaction Release of any N-terminal amino acid, including proline, that is linked to proline, even from a dipeptide or tripeptide.. Functionally, catalyzes the removal of a penultimate prolyl residue from the N-termini of peptides. The sequence is that of Probable Xaa-Pro aminopeptidase P (AMPP) from Blastomyces gilchristii (strain SLH14081) (Blastomyces dermatitidis).